The chain runs to 474 residues: 2-succinylbenzoate--CoA ligase (474 aa).

The protein belongs to the ATP-dependent AMP-binding enzyme family. MenE subfamily.

It catalyses the reaction 2-succinylbenzoate + ATP + CoA = 2-succinylbenzoyl-CoA + AMP + diphosphate. It participates in quinol/quinone metabolism; 1,4-dihydroxy-2-naphthoate biosynthesis; 1,4-dihydroxy-2-naphthoate from chorismate: step 5/7. The protein operates within quinol/quinone metabolism; menaquinone biosynthesis. In terms of biological role, converts 2-succinylbenzoate (OSB) to 2-succinylbenzoyl-CoA (OSB-CoA). In Staphylococcus epidermidis (strain ATCC 35984 / DSM 28319 / BCRC 17069 / CCUG 31568 / BM 3577 / RP62A), this protein is 2-succinylbenzoate--CoA ligase.